Reading from the N-terminus, the 84-residue chain is Envelope glycoprotein N (84 aa).

Residues 1–26 (MSCKKGARQRLYVSLWLFYILVFAAA) form the signal peptide. Topologically, residues 27–45 (TEMDFYSSECHSHTYEIVL) are virion surface. Residues 46 to 66 (NSFSSIWLLINLFLLLCSFAI) form a helical membrane-spanning segment. The Intravirion segment spans residues 67 to 84 (FLKYWCYKTFASETVKGY).

The protein belongs to the herpesviridae glycoprotein N family. In terms of assembly, interacts (via N-terminus) with gM (via N-terminus). The gM-gN heterodimer forms the gCII complex.

It localises to the virion membrane. The protein localises to the host membrane. Its subcellular location is the host Golgi apparatus. The protein resides in the host trans-Golgi network. Functionally, envelope glycoprotein necessary for proper maturation of gM and modulation of its membrane fusion activity. Also plays a critical role in virion morphogenesis. This is Envelope glycoprotein N from Human herpesvirus 6B (strain Z29) (HHV-6 variant B).